A 237-amino-acid chain; its full sequence is Phosphoribosylaminoimidazole-succinocarboxamide synthase (237 aa).

This sequence belongs to the SAICAR synthetase family.

It catalyses the reaction 5-amino-1-(5-phospho-D-ribosyl)imidazole-4-carboxylate + L-aspartate + ATP = (2S)-2-[5-amino-1-(5-phospho-beta-D-ribosyl)imidazole-4-carboxamido]succinate + ADP + phosphate + 2 H(+). Its pathway is purine metabolism; IMP biosynthesis via de novo pathway; 5-amino-1-(5-phospho-D-ribosyl)imidazole-4-carboxamide from 5-amino-1-(5-phospho-D-ribosyl)imidazole-4-carboxylate: step 1/2. This Hamiltonella defensa subsp. Acyrthosiphon pisum (strain 5AT) protein is Phosphoribosylaminoimidazole-succinocarboxamide synthase.